The chain runs to 195 residues: Putative lysine exporter (195 aa).

Transmembrane regions (helical) follow at residues Leu4–Phe24, Leu30–Ser50, Leu61–Phe81, Ile86–Leu106, Ile117–Met137, and Pro170–Phe190.

The protein belongs to the LysO family.

The protein localises to the cell inner membrane. Its function is as follows. Mediates export of lysine. This chain is Putative lysine exporter, found in Haemophilus influenzae (strain ATCC 51907 / DSM 11121 / KW20 / Rd).